Reading from the N-terminus, the 316-residue chain is Pantothenate kinase (316 aa).

95–102 (GSVAVGKS) serves as a coordination point for ATP.

The protein belongs to the prokaryotic pantothenate kinase family.

The protein localises to the cytoplasm. The catalysed reaction is (R)-pantothenate + ATP = (R)-4'-phosphopantothenate + ADP + H(+). It functions in the pathway cofactor biosynthesis; coenzyme A biosynthesis; CoA from (R)-pantothenate: step 1/5. In Shewanella loihica (strain ATCC BAA-1088 / PV-4), this protein is Pantothenate kinase.